A 434-amino-acid polypeptide reads, in one-letter code: Pre-B-cell leukemia transcription factor 3 (434 aa).

Residues 20-41 (SVQGGMALPPPPHGHEGADGDG) are disordered. A compositionally biased stretch (basic and acidic residues) spans 32–41 (HGHEGADGDG). The 194-residue stretch at 41-234 (GRKQDIGDIL…VMILRSRFLD (194 aa)) folds into the PBC domain. The tract at residues 48-127 (DILHQIMTIT…EGVSGPEKGG (80 aa)) is PBC-A. Residues 130 to 234 (AAAAAAAAAS…VMILRSRFLD (105 aa)) form a PBC-B region. Positions 235-297 (ARRKRRNFSK…NKRIRYKKNI (63 aa)) form a DNA-binding region, homeobox; TALE-type. Residues 326 to 341 (NQTNSPTTPNSGSSGS) are compositionally biased toward low complexity. 2 disordered regions span residues 326 to 349 (NQTNSPTTPNSGSSGSFNLPNSGD) and 405 to 434 (ANGGWQDATTPSSVTSPTEGPGSVHSDTSN). Over residues 405–422 (ANGGWQDATTPSSVTSPT) the composition is skewed to polar residues.

Belongs to the TALE/PBX homeobox family. Interacts with PBXIP1.

The protein localises to the nucleus. Transcriptional activator that binds the sequence 5'-ATCAATCAA-3'. In Mus musculus (Mouse), this protein is Pre-B-cell leukemia transcription factor 3 (Pbx3).